A 259-amino-acid chain; its full sequence is Hydroxyethylthiazole kinase (259 aa).

A substrate-binding site is contributed by M37. The ATP site is built by R113 and T158. G185 is a binding site for substrate.

The protein belongs to the Thz kinase family. Requires Mg(2+) as cofactor.

The enzyme catalyses 5-(2-hydroxyethyl)-4-methylthiazole + ATP = 4-methyl-5-(2-phosphooxyethyl)-thiazole + ADP + H(+). Its pathway is cofactor biosynthesis; thiamine diphosphate biosynthesis; 4-methyl-5-(2-phosphoethyl)-thiazole from 5-(2-hydroxyethyl)-4-methylthiazole: step 1/1. Catalyzes the phosphorylation of the hydroxyl group of 4-methyl-5-beta-hydroxyethylthiazole (THZ). This chain is Hydroxyethylthiazole kinase, found in Helicobacter pylori (strain Shi470).